The following is a 723-amino-acid chain: Probable dipeptidyl-peptidase 5 (723 aa).

Positions 1–19 (MAALRWLSAVVAVSTTVLA) are cleaved as a signal peptide. N-linked (GlcNAc...) asparagine glycosylation is found at N79, N97, N154, N255, N381, and N451. The active-site Charge relay system is S561. Residue N608 is glycosylated (N-linked (GlcNAc...) asparagine). Active-site charge relay system residues include D644 and H676.

The protein belongs to the peptidase S9C family.

The protein resides in the secreted. Extracellular dipeptidyl-peptidase which removes N-terminal dipeptides sequentially from polypeptides having unsubstituted N-termini. The sequence is that of Probable dipeptidyl-peptidase 5 (dpp5) from Aspergillus terreus (strain NIH 2624 / FGSC A1156).